The primary structure comprises 392 residues: S-adenosylmethionine synthase (392 aa).

His-20 provides a ligand contact to ATP. A Mg(2+)-binding site is contributed by Asp-22. Glu-48 is a binding site for K(+). 2 residues coordinate L-methionine: Glu-61 and Gln-106. The segment at 106–116 (QSQDIINAIKK) is flexible loop. Residues 171 to 173 (DSK), Asp-248, 254 to 255 (RK), Ala-271, and Lys-275 each bind ATP. Asp-248 provides a ligand contact to L-methionine. Lys-279 provides a ligand contact to L-methionine.

Belongs to the AdoMet synthase family. In terms of assembly, homotetramer; dimer of dimers. Mg(2+) serves as cofactor. K(+) is required as a cofactor.

The protein localises to the cytoplasm. The catalysed reaction is L-methionine + ATP + H2O = S-adenosyl-L-methionine + phosphate + diphosphate. The protein operates within amino-acid biosynthesis; S-adenosyl-L-methionine biosynthesis; S-adenosyl-L-methionine from L-methionine: step 1/1. Its function is as follows. Catalyzes the formation of S-adenosylmethionine (AdoMet) from methionine and ATP. The overall synthetic reaction is composed of two sequential steps, AdoMet formation and the subsequent tripolyphosphate hydrolysis which occurs prior to release of AdoMet from the enzyme. The polypeptide is S-adenosylmethionine synthase (Borrelia garinii subsp. bavariensis (strain ATCC BAA-2496 / DSM 23469 / PBi) (Borreliella bavariensis)).